Here is a 207-residue protein sequence, read N- to C-terminus: Thiamine-phosphate synthase (207 aa).

4-amino-2-methyl-5-(diphosphooxymethyl)pyrimidine is bound by residues 36-40 and N68; that span reads QLRMK. Residues D69 and D88 each coordinate Mg(2+). Residue S106 coordinates 4-amino-2-methyl-5-(diphosphooxymethyl)pyrimidine. 132-134 contacts 2-[(2R,5Z)-2-carboxy-4-methylthiazol-5(2H)-ylidene]ethyl phosphate; sequence TNT. K135 is a binding site for 4-amino-2-methyl-5-(diphosphooxymethyl)pyrimidine. 2-[(2R,5Z)-2-carboxy-4-methylthiazol-5(2H)-ylidene]ethyl phosphate contacts are provided by residues G162 and 182–183; that span reads VS.

Belongs to the thiamine-phosphate synthase family. Requires Mg(2+) as cofactor.

It carries out the reaction 2-[(2R,5Z)-2-carboxy-4-methylthiazol-5(2H)-ylidene]ethyl phosphate + 4-amino-2-methyl-5-(diphosphooxymethyl)pyrimidine + 2 H(+) = thiamine phosphate + CO2 + diphosphate. The enzyme catalyses 2-(2-carboxy-4-methylthiazol-5-yl)ethyl phosphate + 4-amino-2-methyl-5-(diphosphooxymethyl)pyrimidine + 2 H(+) = thiamine phosphate + CO2 + diphosphate. It catalyses the reaction 4-methyl-5-(2-phosphooxyethyl)-thiazole + 4-amino-2-methyl-5-(diphosphooxymethyl)pyrimidine + H(+) = thiamine phosphate + diphosphate. Its pathway is cofactor biosynthesis; thiamine diphosphate biosynthesis; thiamine phosphate from 4-amino-2-methyl-5-diphosphomethylpyrimidine and 4-methyl-5-(2-phosphoethyl)-thiazole: step 1/1. Its function is as follows. Condenses 4-methyl-5-(beta-hydroxyethyl)thiazole monophosphate (THZ-P) and 2-methyl-4-amino-5-hydroxymethyl pyrimidine pyrophosphate (HMP-PP) to form thiamine monophosphate (TMP). In Methanococcus maripaludis (strain C5 / ATCC BAA-1333), this protein is Thiamine-phosphate synthase.